A 287-amino-acid chain; its full sequence is MIADKLFEKVEKNGVVCVGLDTSLDYIPEEFKSKFSNESDMLFAFNKEIIDATLDVSACFKVQIAYYEALGLKGLEAYKNTLSYLREKNALIIADIKRGDIAATAKMYAKAHFEGDFESDFITLNPYMGMDSIDPYLPYIEKNEKGVFVLVRTSNKGAEDIEYLEAGHGKKVYDVVGEKLNTLGKNYLGKHGYSSIGGVVGCTHQEEAKEMRDKLDTMPFLIPGYGAQGGTAKDVAAYLKNGNGGIVNSSRKILLAYKAMEDNKNFAECARKEAISMRDSIREAILK.

Lysine 97 serves as the catalytic Proton donor.

It belongs to the OMP decarboxylase family. Type 2 subfamily.

It carries out the reaction orotidine 5'-phosphate + H(+) = UMP + CO2. It functions in the pathway pyrimidine metabolism; UMP biosynthesis via de novo pathway; UMP from orotate: step 2/2. This chain is Orotidine 5'-phosphate decarboxylase (pyrF), found in Clostridium perfringens (strain 13 / Type A).